Here is a 78-residue protein sequence, read N- to C-terminus: UPF0335 protein RrIowa_0193 (78 aa).

It belongs to the UPF0335 family.

In Rickettsia rickettsii (strain Iowa), this protein is UPF0335 protein RrIowa_0193.